The chain runs to 952 residues: Valine--tRNA ligase (952 aa).

A 'HIGH' region motif is present at residues 42–52 (PNVTGSLHMGH). The short motif at 554–558 (KMSKS) is the 'KMSKS' region element. Position 557 (Lys557) interacts with ATP. Positions 888–952 (AELARLDGEI…EEQKKTIAAL (65 aa)) form a coiled coil.

This sequence belongs to the class-I aminoacyl-tRNA synthetase family. ValS type 1 subfamily. In terms of assembly, monomer.

It is found in the cytoplasm. It carries out the reaction tRNA(Val) + L-valine + ATP = L-valyl-tRNA(Val) + AMP + diphosphate. In terms of biological role, catalyzes the attachment of valine to tRNA(Val). As ValRS can inadvertently accommodate and process structurally similar amino acids such as threonine, to avoid such errors, it has a 'posttransfer' editing activity that hydrolyzes mischarged Thr-tRNA(Val) in a tRNA-dependent manner. The protein is Valine--tRNA ligase of Vibrio parahaemolyticus serotype O3:K6 (strain RIMD 2210633).